The chain runs to 328 residues: 5,10-methylenetetrahydromethanopterin reductase (328 aa).

This sequence belongs to the mer family.

It localises to the cytoplasm. The enzyme catalyses 5-methyl-5,6,7,8-tetrahydromethanopterin + oxidized coenzyme F420-(gamma-L-Glu)(n) + H(+) = 5,10-methylenetetrahydromethanopterin + reduced coenzyme F420-(gamma-L-Glu)(n). The protein operates within one-carbon metabolism; methanogenesis from CO(2); methyl-coenzyme M from 5,10-methylene-5,6,7,8-tetrahydromethanopterin: step 1/2. Its function is as follows. Catalyzes the reversible reduction of methylene-H(4)MPT to methyl-H(4)MPT. This chain is 5,10-methylenetetrahydromethanopterin reductase, found in Methanosarcina barkeri (strain Fusaro / DSM 804).